The sequence spans 379 residues: Cytochrome b (379 aa).

The next 4 membrane-spanning stretches (helical) occupy residues 33–53 (FGSL…FLAM), 77–98 (WLIR…FIHV), 113–133 (WNIG…GYVL), and 178–198 (FFAF…VHLL). The heme b site is built by His-83 and His-97. His-182 and His-196 together coordinate heme b. An a ubiquinone-binding site is contributed by His-201. A run of 4 helical transmembrane segments spans residues 226-246 (TKDL…ALFF), 288-308 (LGGV…PLLN), 320-340 (VTQV…WIGG), and 347-367 (FTTI…ILIP).

It belongs to the cytochrome b family. The cytochrome bc1 complex contains 11 subunits: 3 respiratory subunits (MT-CYB, CYC1 and UQCRFS1), 2 core proteins (UQCRC1 and UQCRC2) and 6 low-molecular weight proteins (UQCRH/QCR6, UQCRB/QCR7, UQCRQ/QCR8, UQCR10/QCR9, UQCR11/QCR10 and a cleavage product of UQCRFS1). This cytochrome bc1 complex then forms a dimer. Heme b serves as cofactor.

Its subcellular location is the mitochondrion inner membrane. Its function is as follows. Component of the ubiquinol-cytochrome c reductase complex (complex III or cytochrome b-c1 complex) that is part of the mitochondrial respiratory chain. The b-c1 complex mediates electron transfer from ubiquinol to cytochrome c. Contributes to the generation of a proton gradient across the mitochondrial membrane that is then used for ATP synthesis. This is Cytochrome b (MT-CYB) from Akodon paranaensis (Parana grass mouse).